The sequence spans 433 residues: Enolase (433 aa).

Residue Gln167 participates in (2R)-2-phosphoglycerate binding. Glu209 serves as the catalytic Proton donor. Residues Asp246, Glu291, and Asp318 each contribute to the Mg(2+) site. Lys326 carries the post-translational modification N6-acetyllysine. Lys343, Arg372, Ser373, and Lys394 together coordinate (2R)-2-phosphoglycerate. Lys343 (proton acceptor) is an active-site residue. The residue at position 343 (Lys343) is an N6-(2-hydroxyisobutyryl)lysine.

The protein belongs to the enolase family. As to quaternary structure, component of the RNA degradosome, a multiprotein complex involved in RNA processing and mRNA degradation. It depends on Mg(2+) as a cofactor. Post-translationally, acetylated and 2-hydroxyisobutyrylated at Lys-326 and Lys-343, respectively, reducing the enolase activity. Deacetylated and de-2-hydroxyisobutyrylated by NpdA/CobB, increasing the enolase activity.

The protein resides in the cytoplasm. It localises to the secreted. It is found in the cell surface. It carries out the reaction (2R)-2-phosphoglycerate = phosphoenolpyruvate + H2O. Its pathway is carbohydrate degradation; glycolysis; pyruvate from D-glyceraldehyde 3-phosphate: step 4/5. Its function is as follows. Catalyzes the reversible conversion of 2-phosphoglycerate (2-PG) into phosphoenolpyruvate (PEP). It is essential for the degradation of carbohydrates via glycolysis. The protein is Enolase of Proteus mirabilis (strain HI4320).